The primary structure comprises 322 residues: MLNSFKLSLQYILPKLWLTRLAGWGASKRAGWLTKLVIDLFVKYYKVDMKEAQKPDTASYRTFNEFFVRPLRDEVRPIDTDPNVLVMPADGVISQLGKIEEDKILQAKGHNYSLEALLAGNYLMANLFRNGTFVTTYLSPRDYHRVHMPCNGILREMIYVPGDLFSVNHLTAQNVPNLFARNERVICLFDTEFGPMAQILVGATIVGSIETVWAGTITPPREGIIKRWTWPAGENDGSVALLKGQEMGRFKLGSTVINLFAPGKVNLVEQLESLSVTKIGQPLAVSTETFVTPDAEPAPLPAEEIEAEHDASPLVDDKKDQV.

Active-site charge relay system; for autoendoproteolytic cleavage activity residues include aspartate 90, histidine 147, and serine 254. Serine 254 (schiff-base intermediate with substrate; via pyruvic acid; for decarboxylase activity) is an active-site residue. A Pyruvic acid (Ser); by autocatalysis modification is found at serine 254. The tract at residues 293 to 322 (PDAEPAPLPAEEIEAEHDASPLVDDKKDQV) is disordered. Basic and acidic residues predominate over residues 308–322 (EHDASPLVDDKKDQV).

Belongs to the phosphatidylserine decarboxylase family. PSD-B subfamily. Prokaryotic type I sub-subfamily. In terms of assembly, heterodimer of a large membrane-associated beta subunit and a small pyruvoyl-containing alpha subunit. Pyruvate is required as a cofactor. Post-translationally, is synthesized initially as an inactive proenzyme. Formation of the active enzyme involves a self-maturation process in which the active site pyruvoyl group is generated from an internal serine residue via an autocatalytic post-translational modification. Two non-identical subunits are generated from the proenzyme in this reaction, and the pyruvate is formed at the N-terminus of the alpha chain, which is derived from the carboxyl end of the proenzyme. The autoendoproteolytic cleavage occurs by a canonical serine protease mechanism, in which the side chain hydroxyl group of the serine supplies its oxygen atom to form the C-terminus of the beta chain, while the remainder of the serine residue undergoes an oxidative deamination to produce ammonia and the pyruvoyl prosthetic group on the alpha chain. During this reaction, the Ser that is part of the protease active site of the proenzyme becomes the pyruvoyl prosthetic group, which constitutes an essential element of the active site of the mature decarboxylase.

The protein resides in the cell membrane. The catalysed reaction is a 1,2-diacyl-sn-glycero-3-phospho-L-serine + H(+) = a 1,2-diacyl-sn-glycero-3-phosphoethanolamine + CO2. Its pathway is phospholipid metabolism; phosphatidylethanolamine biosynthesis; phosphatidylethanolamine from CDP-diacylglycerol: step 2/2. Its function is as follows. Catalyzes the formation of phosphatidylethanolamine (PtdEtn) from phosphatidylserine (PtdSer). This chain is Phosphatidylserine decarboxylase proenzyme, found in Escherichia coli (strain 55989 / EAEC).